The chain runs to 547 residues: Solute carrier family 22 member 7 (547 aa).

The chain crosses the membrane as a helical span at residues 21 to 41 (VALLALPRVLLPMHFLLPIFL). Positions 91–103 (NSTLWGEGQNSGE) are enriched in polar residues. A disordered region spans residues 91-112 (NSTLWGEGQNSGEQPEGEPSTV). The next 11 membrane-spanning stretches (helical) occupy residues 145–165 (AIST…GYLS), 179–199 (VSSL…MFAI), 203–223 (LTGM…LEWL), 233–253 (VLSS…GYLI), 258–278 (WLLL…WWVP), 345–365 (ISLC…GVSL), 367–387 (LSGL…VELP), 403–423 (LTMA…ILVS), 431–451 (TALA…AYLF), 465–485 (MGLT…AALL), and 492–512 (LPKL…LLLP). The disordered stretch occupies residues 521 to 547 (ETIQDVERKSAPSSLQEEEMPMKQVQD).

It belongs to the major facilitator (TC 2.A.1) superfamily. Organic cation transporter (TC 2.A.1.19) family.

Its subcellular location is the basolateral cell membrane. The protein resides in the apical cell membrane. It localises to the cell membrane. It carries out the reaction orotate(out) + L-glutamate(in) = orotate(in) + L-glutamate(out). The catalysed reaction is 3',5'-cyclic GMP(in) = 3',5'-cyclic GMP(out). It catalyses the reaction GMP(in) = GMP(out). The enzyme catalyses 2'-deoxyguanosine(in) = 2'-deoxyguanosine(out). It carries out the reaction GDP(in) = GDP(out). The catalysed reaction is guanosine(in) = guanosine(out). It catalyses the reaction GTP(in) = GTP(out). The enzyme catalyses 3',5'-cyclic AMP(in) = 3',5'-cyclic AMP(out). It carries out the reaction creatinine(in) = creatinine(out). The catalysed reaction is prostaglandin E2(out) = prostaglandin E2(in). It catalyses the reaction 2-oxoglutarate(in) = 2-oxoglutarate(out). The enzyme catalyses glutarate(in) = glutarate(out). It carries out the reaction urate(out) = urate(in). The catalysed reaction is estrone 3-sulfate(out) = estrone 3-sulfate(in). Its function is as follows. Functions as a Na(+)-independent bidirectional multispecific transporter. Contributes to the renal and hepatic elimination of endogenous organic compounds from the systemic circulation into the urine and bile, respectively. Capable of transporting a wide range of purine and pyrimidine nucleobases, nucleosides and nucleotides, with cGMP, 2'deoxyguanosine and GMP being the preferred substrates. Functions as a pH- and chloride-independent cGMP bidirectional facilitative transporter that can regulate both intracellular and extracellular levels of cGMP and may be involved in cGMP signaling pathways. Mediates orotate/glutamate bidirectional exchange and most likely display a physiological role in hepatic release of glutamate into the blood. Involved in renal secretion and possible reabsorption of creatinine. Able to uptake prostaglandin E2 (PGE2) and may contribute to PGE2 renal excretion. Also transports alpha-ketoglutarate and urate. Apart from the orotate/glutamate exchange, the counterions for the uptake of other SLC22A7/OAT2 substrates remain to be identified. This is Solute carrier family 22 member 7 (SLC22A7) from Bos taurus (Bovine).